The chain runs to 494 residues: Alpha-amylase 2 (494 aa).

The N-terminal stretch at 1-18 (MFLAKSIVCLALLAVANA) is a signal peptide. A disulfide bridge links cysteine 46 with cysteine 102. Residues asparagine 116, arginine 165, and aspartate 174 each coordinate Ca(2+). Residues cysteine 153 and cysteine 167 are joined by a disulfide bond. Arginine 202 contacts chloride. Aspartate 204 acts as the Nucleophile in catalysis. Histidine 208 contacts Ca(2+). The Proton donor role is filled by glutamate 241. Residues asparagine 304 and arginine 343 each coordinate chloride. The interval 350 to 370 (FTDTDQGPPTTDGQNIASPSF) is disordered. Residues 351-363 (TDTDQGPPTTDGQ) show a composition bias toward low complexity. Cystine bridges form between cysteine 376-cysteine 382 and cysteine 448-cysteine 460.

It belongs to the glycosyl hydrolase 13 family. In terms of assembly, monomer. Ca(2+) is required as a cofactor. Chloride serves as cofactor.

It catalyses the reaction Endohydrolysis of (1-&gt;4)-alpha-D-glucosidic linkages in polysaccharides containing three or more (1-&gt;4)-alpha-linked D-glucose units.. This Drosophila ananassae (Fruit fly) protein is Alpha-amylase 2 (Amy58).